The primary structure comprises 380 residues: Methylthioribose-1-phosphate isomerase (380 aa).

The active-site Proton donor is aspartate 257.

The protein belongs to the eIF-2B alpha/beta/delta subunits family. MtnA subfamily.

Its subcellular location is the cytoplasm. It localises to the nucleus. It carries out the reaction 5-(methylsulfanyl)-alpha-D-ribose 1-phosphate = 5-(methylsulfanyl)-D-ribulose 1-phosphate. The protein operates within amino-acid biosynthesis; L-methionine biosynthesis via salvage pathway; L-methionine from S-methyl-5-thio-alpha-D-ribose 1-phosphate: step 1/6. Its function is as follows. Catalyzes the interconversion of methylthioribose-1-phosphate (MTR-1-P) into methylthioribulose-1-phosphate (MTRu-1-P). The sequence is that of Methylthioribose-1-phosphate isomerase from Naegleria gruberi (Amoeba).